Here is a 330-residue protein sequence, read N- to C-terminus: D-lactate dehydrogenase (330 aa).

Residues R155–I156, D175, M206–P207, N212, M233–R235, and D259 each bind NAD(+). R235 is an active-site residue. The active site involves E264. Catalysis depends on H296, which acts as the Proton donor.

The protein belongs to the D-isomer specific 2-hydroxyacid dehydrogenase family.

The enzyme catalyses (R)-lactate + NAD(+) = pyruvate + NADH + H(+). The polypeptide is D-lactate dehydrogenase (ldhD) (Streptococcus agalactiae serotype V (strain ATCC BAA-611 / 2603 V/R)).